The following is a 581-amino-acid chain: Frizzled-3 (581 aa).

The signal sequence occupies residues 1 to 19; that stretch reads MYAASILILHLTWAVATIA. Over 20 to 237 the chain is Extracellular; it reads ANGAGHNGPV…TSSQKKTSET (218 aa). The region spanning 35–156 is the FZ domain; it reads PNGLQCQPIA…PEKHELCMQI (122 aa). Cystine bridges form between Cys-40/Cys-101, Cys-48/Cys-94, Cys-85/Cys-123, Cys-112/Cys-153, and Cys-116/Cys-141. N-linked (GlcNAc...) asparagine glycosylation occurs at Asn-54. N-linked (GlcNAc...) asparagine glycosylation is present at Asn-206. Residues 238–258 form a helical membrane-spanning segment; it reads LILGLSAVCFVLTLFALVTFW. Topologically, residues 259 to 270 are cytoplasmic; that stretch reads AEPTRFGYPERP. A helical membrane pass occupies residues 271-291; the sequence is VLFLCLCYNLFSVCYLERIVF. Over 292 to 321 the chain is Extracellular; it reads HNQARMHDVELQGRLMRPGCLLTPPCLASY. A helical transmembrane segment spans residues 322–342; it reads ITTSYLSLCAASWWLIFALCF. At 343–359 the chain is on the cytoplasmic side; it reads YLSSHKKWSSEALEKRS. Residues 360 to 380 form a helical membrane-spanning segment; the sequence is GLFHVLAWVPPLAPPIAALLL. Over 381-393 the chain is Extracellular; it reads EKVRPSELTGMCY. The helical transmembrane segment at 394 to 414 threads the bilayer; it reads APGFVELPALVLLLLGLYFTL. The Cytoplasmic segment spans residues 415–442; it reads RASRSLLSLQQQLQPTLAHHRFGQIRKR. A helical membrane pass occupies residues 443 to 463; it reads FVLFSLLYFAPTTAGVVAALC. Residues 464–488 lie on the Extracellular side of the membrane; the sequence is ERYADSVPSCSTPDDCLSPTPLSAW. The helical transmembrane segment at 489–509 threads the bilayer; that stretch reads PALVRIFFQLVGGTLTGLWVW. At 510–581 the chain is on the cytoplasmic side; the sequence is SRKTCESYRN…PVYNPNQSRV (72 aa). The PDZ-binding signature appears at 579–581; that stretch reads SRV.

Belongs to the G-protein coupled receptor Fz/Smo family. As to expression, wing, leg and eye imaginal disks. In embryos, expressed is seen in brain, proventriculus, Malpighian tubules, anal plate and visceral mesoderm of parasegment 8.

The protein localises to the membrane. In terms of biological role, receptor for Wnt proteins. Most of frizzled receptors are coupled to the beta-catenin canonical signaling pathway, which leads to the activation of disheveled proteins, inhibition of GSK-3 kinase, nuclear accumulation of beta-catenin and activation of Wnt target genes. A second signaling pathway involving PKC and calcium fluxes has been seen for some family members, but it is not yet clear if it represents a distinct pathway or if it can be integrated in the canonical pathway, as PKC seems to be required for Wnt-mediated inactivation of GSK-3 kinase. Both pathways seem to involve interactions with G-proteins. Required to coordinate the cytoskeletons of epidermal cells to produce a parallel array of cuticular hairs and bristles. This is Frizzled-3 (fz3) from Drosophila melanogaster (Fruit fly).